We begin with the raw amino-acid sequence, 353 residues long: Putative transport protein aq_740 (353 aa).

The next 8 helical transmembrane spans lie at Leu-4–Leu-24, Phe-28–Ile-48, Phe-60–Ile-80, Val-156–Ile-176, Val-209–Ile-229, Leu-240–Val-260, Leu-268–Ile-288, and Val-309–Leu-329.

This sequence belongs to the autoinducer-2 exporter (AI-2E) (TC 2.A.86) family.

It localises to the cell membrane. This chain is Putative transport protein aq_740, found in Aquifex aeolicus (strain VF5).